The following is a 466-amino-acid chain: 3-isopropylmalate dehydratase large subunit (466 aa).

[4Fe-4S] cluster contacts are provided by C347, C407, and C410.

The protein belongs to the aconitase/IPM isomerase family. LeuC type 1 subfamily. As to quaternary structure, heterodimer of LeuC and LeuD. The cofactor is [4Fe-4S] cluster.

The catalysed reaction is (2R,3S)-3-isopropylmalate = (2S)-2-isopropylmalate. Its pathway is amino-acid biosynthesis; L-leucine biosynthesis; L-leucine from 3-methyl-2-oxobutanoate: step 2/4. Functionally, catalyzes the isomerization between 2-isopropylmalate and 3-isopropylmalate, via the formation of 2-isopropylmaleate. The protein is 3-isopropylmalate dehydratase large subunit of Vibrio vulnificus (strain CMCP6).